The chain runs to 302 residues: MNAHKLTHLKQLESESIHIFREVVSEFERPVMLYSIGKDSAVMLHLAMKAFYPGKPPFPLMHVDTTWKFRDMIAFRDRRAQELGLDLIIHVNEEGVRQGINPFVHGSKKHTDIMKTEGLKQALDKYRFDAAFGGARRDEEKSRAKERVYSFRDRHHRWDPKNQRPELWNLYNGKINKGESIRVFPLSNWTELDVWQYIYLEDIPIVPLYFAAERPVVERDGMLIMVDDERMPLLPGEVPMRKKVRFRTLGCYPLTGAIESDAATLPEIIQEMLLTRTSERQGRLIDHDQAGSMEEKKKEGYF.

Belongs to the PAPS reductase family. CysD subfamily. As to quaternary structure, heterodimer composed of CysD, the smaller subunit, and CysN.

It catalyses the reaction sulfate + ATP + H(+) = adenosine 5'-phosphosulfate + diphosphate. The protein operates within sulfur metabolism; hydrogen sulfide biosynthesis; sulfite from sulfate: step 1/3. In terms of biological role, with CysN forms the ATP sulfurylase (ATPS) that catalyzes the adenylation of sulfate producing adenosine 5'-phosphosulfate (APS) and diphosphate, the first enzymatic step in sulfur assimilation pathway. APS synthesis involves the formation of a high-energy phosphoric-sulfuric acid anhydride bond driven by GTP hydrolysis by CysN coupled to ATP hydrolysis by CysD. The sequence is that of Sulfate adenylyltransferase subunit 2 from Methylococcus capsulatus (strain ATCC 33009 / NCIMB 11132 / Bath).